Consider the following 215-residue polypeptide: Probable phosphoglycerate mutase GpmB (215 aa).

Residues 8–15 (RHGETQWN), 21–22 (QG), Arg-58, Arg-60, 82–85 (ELNM), 104–105 (RR), and 151–152 (GI) each bind substrate. His-9 (tele-phosphohistidine intermediate) is an active-site residue. The active-site Proton donor/acceptor is the Glu-82.

Belongs to the phosphoglycerate mutase family. GpmB subfamily.

It carries out the reaction (2R)-2-phosphoglycerate = (2R)-3-phosphoglycerate. Its pathway is carbohydrate degradation; glycolysis; pyruvate from D-glyceraldehyde 3-phosphate: step 3/5. In Shigella dysenteriae serotype 1 (strain Sd197), this protein is Probable phosphoglycerate mutase GpmB.